The following is a 1865-amino-acid chain: Endoribonuclease Dicer (1865 aa).

The Helicase ATP-binding domain maps to 41–213; the sequence is LLEAALEHNT…DLEEKIQNLE (173 aa). 54 to 61 serves as a coordination point for ATP; it reads LNTGSGKT. The DECH box signature appears at 161-164; it reads DECH. The disordered stretch occupies residues 397–417; it reads SWSDSEDDDEDEEAEAKEKTE. Residues 400–411 are compositionally biased toward acidic residues; that stretch reads DSEDDDEDEEAE. A Helicase C-terminal domain is found at 419-588; that stretch reads NFPSPFTNIL…SAECNDFELE (170 aa). The 93-residue stretch at 616–708 folds into the Dicer dsRNA-binding fold domain; sequence AIGHVNRYCA…MPVGKETVKY (93 aa). Residues 713-732 form a disordered region; sequence DLHDEEETSVPGRPGSTKRR. One can recognise a PAZ domain in the interval 881-1028; it reads KFMEDIEKSE…LVPELCAIHP (148 aa). 2 stretches are compositionally biased toward polar residues: residues 1111 to 1128 and 1192 to 1201; these read GTSS…SMEV and STQTTTSVSV. Disordered stretches follow at residues 1111–1142 and 1190–1259; these read GTSS…PDEK and DLST…DCRS. Positions 1240 to 1252 are enriched in low complexity; that stretch reads SETATSTPAPSET. Positions 1262–1385 constitute an RNase III 1 domain; sequence AGPAWDSPKT…TDKWDSDENK (124 aa). Positions 1298, 1377, and 1380 each coordinate Mg(2+). The segment at 1373-1417 is disordered; that stretch reads KSSTDKWDSDENKDLANGKASDDEDEDDDDEPEEAEVEPSKEDVN. Residues 1374–1388 are compositionally biased toward basic and acidic residues; it reads SSTDKWDSDENKDLA. Acidic residues predominate over residues 1394–1409; that stretch reads DDEDEDDDDEPEEAEV. The 159-residue stretch at 1609-1767 folds into the RNase III 2 domain; it reads FLNFESKINY…LAGAIYMDSG (159 aa). Mg(2+) contacts are provided by Glu1648, Asp1753, and Glu1756. The region spanning 1792–1857 is the DRBM domain; the sequence is VPRSPVRELL…ARRALRSLKA (66 aa).

Belongs to the helicase family. Dicer subfamily. Component of the RISC loading complex (RLC), or micro-RNA (miRNA) loading complex (miRLC), which is composed of dicer1, ago2 and tarbp2; dicer1 and tarbp2 are required to process precursor miRNAs (pre-miRNAs) to mature miRNAs and then load them onto ago2. Note that the trimeric RLC/miRLC is also referred to as RISC. Requires Mg(2+) as cofactor. Mn(2+) serves as cofactor.

The protein resides in the cytoplasm. The enzyme catalyses Endonucleolytic cleavage to 5'-phosphomonoester.. Double-stranded RNA (dsRNA) endoribonuclease playing a central role in short dsRNA-mediated post-transcriptional gene silencing. Cleaves naturally occurring long dsRNAs and short hairpin pre-microRNAs (miRNA) into fragments of twenty-one to twenty-three nucleotides with 3' overhang of two nucleotides, producing respectively short interfering RNAs (siRNA) and mature microRNAs. SiRNAs and miRNAs serve as guide to direct the RNA-induced silencing complex (RISC) to complementary RNAs to degrade them or prevent their translation. Gene silencing mediated by siRNAs, also called RNA interference, controls the elimination of transcripts from mobile and repetitive DNA elements of the genome but also the degradation of exogenous RNA of viral origin for instance. The miRNA pathway on the other side is a mean to specifically regulate the expression of target genes. The polypeptide is Endoribonuclease Dicer (dicer1) (Danio rerio (Zebrafish)).